The sequence spans 744 residues: Potassium-transporting ATPase ATP-binding subunit (744 aa).

Transmembrane regions (helical) follow at residues 80 to 100 (PVMF…VMAL), 108 to 128 (AGFI…ANVA), 265 to 285 (LALT…TVTL), and 310 to 330 (VLVA…LSAI). Residue aspartate 363 is the 4-aspartylphosphate intermediate of the active site. ATP is bound by residues aspartate 400, glutamate 404, 435 to 442 (FSAQTRMS), and lysine 457. Positions 580 and 584 each coordinate Mg(2+). Transmembrane regions (helical) follow at residues 650 to 670 (FAII…LNVM), 678 to 698 (AVMS…PLAL), and 724 to 744 (LLLP…MGWV).

It belongs to the cation transport ATPase (P-type) (TC 3.A.3) family. Type IA subfamily. The system is composed of three essential subunits: KdpA, KdpB and KdpC.

Its subcellular location is the cell inner membrane. It carries out the reaction K(+)(out) + ATP + H2O = K(+)(in) + ADP + phosphate + H(+). Its function is as follows. Part of the high-affinity ATP-driven potassium transport (or Kdp) system, which catalyzes the hydrolysis of ATP coupled with the electrogenic transport of potassium into the cytoplasm. This subunit is responsible for energy coupling to the transport system and for the release of the potassium ions to the cytoplasm. This chain is Potassium-transporting ATPase ATP-binding subunit, found in Ralstonia nicotianae (strain ATCC BAA-1114 / GMI1000) (Ralstonia solanacearum).